Here is a 355-residue protein sequence, read N- to C-terminus: Phosphate acyltransferase (355 aa).

It belongs to the PlsX family. In terms of assembly, homodimer. Probably interacts with PlsY.

The protein resides in the cytoplasm. The enzyme catalyses a fatty acyl-[ACP] + phosphate = an acyl phosphate + holo-[ACP]. Its pathway is lipid metabolism; phospholipid metabolism. Catalyzes the reversible formation of acyl-phosphate (acyl-PO(4)) from acyl-[acyl-carrier-protein] (acyl-ACP). This enzyme utilizes acyl-ACP as fatty acyl donor, but not acyl-CoA. In Erythrobacter litoralis (strain HTCC2594), this protein is Phosphate acyltransferase.